Consider the following 787-residue polypeptide: Pleckstrin homology domain-containing family G member 6 (787 aa).

A DH domain is found at 161 to 353 (HQQEALWELL…ESFLRHINGQ (193 aa)). Residues 409 to 509 (QLLLEGPVRV…WLEKTQHAQT (101 aa)) form the PH domain. Positions 533-762 (QGTESPSTRP…EPGNGKPRRL (230 aa)) are disordered. Residues 535 to 557 (TESPSTRPSTPSPSPEDSQSSAE) show a composition bias toward low complexity. Positions 724–742 (LRPRSLREDMLREIREELA) are enriched in basic and acidic residues.

Interacts with MYH10. Interacts with ELMO1 and EZR (in an open conformation). Interacts with CSPP1.

The protein localises to the cell projection. It is found in the microvillus. The protein resides in the cytoplasm. Its subcellular location is the cytoskeleton. It localises to the spindle. The protein localises to the cleavage furrow. Guanine nucleotide exchange factor activating the small GTPase RHOA, which, in turn, induces myosin filament formation. Also activates RHOG. Does not activate RAC1, or to a much lower extent than RHOA and RHOG. Part of a functional unit, involving PLEKHG6, MYH10 and RHOA, at the cleavage furrow to advance furrow ingression during cytokinesis. In epithelial cells, required for the formation of microvilli and membrane ruffles on the apical pole. Along with EZR, required for normal macropinocytosis. This is Pleckstrin homology domain-containing family G member 6 (Plekhg6) from Mus musculus (Mouse).